The chain runs to 2671 residues: Inositol 1,4,5-trisphosphate-gated calcium channel ITPR3 (2671 aa).

The Cytoplasmic segment spans residues 1–2202 (MSEMSSFLHI…LIYWFSRRMT (2202 aa)). 5 consecutive MIR domains span residues 113–173 (GDVV…LRSN), 174–224 (GDNV…INLF), 232–288 (EEVL…VEVV), 295–372 (GGAG…LDPT), and 378–434 (DSFV…IVSV). 1D-myo-inositol 1,4,5-trisphosphate is bound by residues Arg266, Thr268, Leu269, and Arg270. The interval 322–342 (SYKGDASDPKAAGMGAQGRTG) is disordered. 1D-myo-inositol 1,4,5-trisphosphate-binding residues include Arg503, Lys507, Arg510, Tyr567, Arg568, and Lys569. Position 743 (Arg743) interacts with Ca(2+). Phosphoserine is present on residues Ser916 and Ser934. 2 residues coordinate Ca(2+): Glu1122 and Glu1125. Disordered regions lie at residues 1132–1163 (GSGK…PPGE) and 1809–1848 (NDLG…GPSL). Ser1813, Ser1832, and Ser1834 each carry phosphoserine. Positions 1882 and 1946 each coordinate Ca(2+). ATP contacts are provided by Ala1996, Glu2149, and Lys2152. A helical membrane pass occupies residues 2203 to 2223 (LWGSISFNLAVFINIIIAFFY). Residues 2224–2235 (PYMEGASTGVLD) lie on the Extracellular side of the membrane. The chain crosses the membrane as a helical span at residues 2236 to 2256 (SPLISLLFWILICFSIAALFT). Residues 2257-2264 (KRYSIRPL) lie on the Cytoplasmic side of the membrane. A helical membrane pass occupies residues 2265 to 2285 (IVALILRSIYYLGIGPTLNIL). At 2286 to 2325 (GALNLTNKIVFVVSFVGNRGTFIRGYKAMVMDMEFLYHVG) the chain is on the extracellular side. Residues 2326 to 2346 (YILTSVLGLFAHELFYSILLF) form a helical membrane-spanning segment. The Cytoplasmic segment spans residues 2347–2368 (DLIYREETLFNVIKSVTRNGRS). The chain crosses the membrane as a helical span at residues 2369-2389 (ILLTALLALILVYLFSIVGFL). Over 2390 to 2496 (FLKDDFILEV…ESLFPARVVY (107 aa)) the chain is Extracellular. A disulfide bond links Cys2455 and Cys2461. The chain crosses the membrane as a helical span at residues 2497–2517 (DLLFFFIVIIIVLNLIFGVII). Residues 2518-2671 (DTFADLRSEK…FVDVQNCISR (154 aa)) lie on the Cytoplasmic side of the membrane. ATP is bound by residues Cys2538 and Phe2539. Residue Cys2538 participates in Zn(2+) binding. Residues Cys2541 and His2558 each contribute to the Zn(2+) site. 4 residues coordinate ATP: Lys2560, His2563, Asn2564, and Met2565. Residue His2563 coordinates Zn(2+). Residue Thr2581 coordinates Ca(2+). Residues Ser2609 and Ser2670 each carry the phosphoserine modification.

This sequence belongs to the InsP3 receptor family. In terms of assembly, homotetramer. Homodimer. Interacts with TRPC1, TRPC3 and TRPC4. Interacts with TRPV4. Interacts with SIGMAR1. Interacts with PML and AKT1. Interacts with IRAG2 (via coiled-coil domain). Interacts with CABP1. Interacts with TMBIM4/LFG4. Interacts with CEMIP. Interacts with TESPA1. Interacts with TMEM203. Interacts with BOK; regulates ITPR3 expression. Interacts with BCL2L10. Interacts with CHGA and CHGB. Phosphorylated by AKT1 on serine and/or threonine residues. Expressed in intestinal crypt and villus epithelial cells.

It localises to the endoplasmic reticulum membrane. Its subcellular location is the cytoplasmic vesicle. The protein localises to the secretory vesicle membrane. The enzyme catalyses Ca(2+)(in) = Ca(2+)(out). Inositol 1,4,5-trisphosphate-gated calcium channel is regulated by cytosolic calcium in a biphasic manner. At low concentrations, cytosolic calcium binds at a high-affinity juxtamembrane domain (JD) calcium binding site, allowing ITPR3 to activate by escaping a low-energy resting state through an ensemble of preactivated states. At high cytosolic calcium concentrations, ITPR3 preferentially enters an inhibited state stabilized by calcium binding at a second, low-affinity cytoplasmic domain (CD) calcium binding site. In terms of biological role, inositol 1,4,5-trisphosphate-gated calcium channel that, upon 1D-myo-inositol 1,4,5-trisphosphate binding, transports calcium from the endoplasmic reticulum lumen to cytoplasm, thus releasing the intracellular calcium and therefore participates in cellular calcium ion homeostasis. 1D-myo-inositol 1,4,5-trisphosphate binds to the ligand-free channel without altering its global conformation, yielding the low-energy resting state, then progresses through resting-to preactivated transitions to the higher energy preactivated state, which increases affinity for calcium, promoting binding of the low basal cytosolic calcium at the juxtamembrane domain (JD) site, favoring the transition through the ensemble of high-energy intermediate states along the trajectory to the fully-open activated state. Upon opening, releases calcium in the cytosol where it can bind to the low-affinity cytoplasmic domain (CD) site and stabilizes the inhibited state to terminate calcium release. This Homo sapiens (Human) protein is Inositol 1,4,5-trisphosphate-gated calcium channel ITPR3.